The chain runs to 832 residues: Vacuolar transmembrane transporter penV (832 aa).

Transmembrane regions (helical) follow at residues 39-59 and 117-137; these read LYTQ…AFCI and FFKF…AIIL. The tract at residues 152–171 is disordered; it reads WDNPPGNKTTSPIDGSEKEK. N-linked (GlcNAc...) asparagine glycosylation occurs at Asn-158. Residues 178 to 198 traverse the membrane as a helical segment; the sequence is YLWIYVLFAYVFSGLAIYMLL. Asn-214 is a glycosylation site (N-linked (GlcNAc...) asparagine). The interval 291-322 is disordered; that stretch reads NDGNALPLTEQQPRDADDERSGLLSGHDNEHV. Over residues 302–321 the composition is skewed to basic and acidic residues; that stretch reads QPRDADDERSGLLSGHDNEH. The next 9 membrane-spanning stretches (helical) occupy residues 434 to 454, 483 to 503, 524 to 544, 560 to 582, 587 to 608, 623 to 645, 650 to 672, 687 to 707, and 713 to 733; these read FVIG…ASLL, GLPT…YEWL, FFFS…ASGF, TIAL…LLIL, LFPF…FLSA, FSYG…YSVF, LICL…QLLY, MICN…IGVL, and ITRS…SYWF. Residues 754–777 are disordered; that stretch reads PGGGDISPSPSSTLSPPSGLDRDS. Over residues 759-771 the composition is skewed to low complexity; sequence ISPSPSSTLSPPS.

Belongs to the CSC1 (TC 1.A.17) family.

It localises to the vacuole membrane. In terms of biological role, vacuolar transmembrane transporter that participates in the first stage of the beta-lactam biosynthesis (the formation of the ACV tripeptide), probably taking part in the supply of amino acids from the vacuolar lumen to the vacuole-anchored ACV synthetase. In Penicillium rubens (strain ATCC 28089 / DSM 1075 / NRRL 1951 / Wisconsin 54-1255) (Penicillium chrysogenum), this protein is Vacuolar transmembrane transporter penV.